We begin with the raw amino-acid sequence, 571 residues long: Calcium-dependent protein kinase 16 (571 aa).

Residues 1 to 74 (MGLCFSSAAK…TRHTPPHGKV (74 aa)) are disordered. Residue glycine 2 is the site of N-myristoyl glycine attachment. A lipid anchor (S-palmitoyl cysteine) is attached at cysteine 4. Residues 63–72 (TPTRHTPPHG) are compositionally biased toward basic residues. A Protein kinase domain is found at 108 to 368 (YTIGKLLGHG…AAQALSHPWV (261 aa)). Residues 114-122 (LGHGQFGYT) and lysine 137 each bind ATP. The Proton acceptor role is filled by aspartate 234. The residue at position 274 (serine 274) is a Phosphoserine. The tract at residues 374–404 (ASEIPIDISVLNNMRQFVKFSRLKQFALRAL) is autoinhibitory domain. EF-hand domains are found at residues 411-446 (EELA…DHPW), 448-483 (LKDA…VNQL), 490-525 (KWQQ…KGSI), and 528-555 (LLEE…ASIK). 16 residues coordinate Ca(2+): aspartate 424, aspartate 426, asparagine 428, glutamate 435, aspartate 461, asparagine 463, aspartate 465, glutamate 472, aspartate 503, aspartate 505, aspartate 507, glutamate 514, aspartate 533, aspartate 535, aspartate 537, and lysine 539. Serine 541 carries the post-translational modification Phosphoserine. Glutamate 544 lines the Ca(2+) pocket.

It belongs to the protein kinase superfamily. Ser/Thr protein kinase family. CDPK subfamily.

The protein resides in the cell membrane. Its subcellular location is the nucleus. The catalysed reaction is L-seryl-[protein] + ATP = O-phospho-L-seryl-[protein] + ADP + H(+). It carries out the reaction L-threonyl-[protein] + ATP = O-phospho-L-threonyl-[protein] + ADP + H(+). Activated by calcium. Autophosphorylation may play an important role in the regulation of the kinase activity. May play a role in signal transduction pathways that involve calcium as a second messenger. In Arabidopsis thaliana (Mouse-ear cress), this protein is Calcium-dependent protein kinase 16 (CPK16).